A 199-amino-acid polypeptide reads, in one-letter code: Mediator of RNA polymerase II transcription subunit 10 (199 aa).

The protein belongs to the Mediator complex subunit 10 family. As to quaternary structure, component of the Mediator complex.

The protein localises to the nucleus. Functionally, component of the Mediator complex, a coactivator involved in the regulated transcription of nearly all RNA polymerase II-dependent genes. Mediator functions as a bridge to convey information from gene-specific regulatory proteins to the basal RNA polymerase II transcription machinery. Mediator is recruited to promoters by direct interactions with regulatory proteins and serves as a scaffold for the assembly of a functional preinitiation complex with RNA polymerase II and the general transcription factors. The chain is Mediator of RNA polymerase II transcription subunit 10 (NUT2) from Candida glabrata (strain ATCC 2001 / BCRC 20586 / JCM 3761 / NBRC 0622 / NRRL Y-65 / CBS 138) (Yeast).